We begin with the raw amino-acid sequence, 264 residues long: Energy-coupling factor transporter ATP-binding protein EcfA1 (264 aa).

The ABC transporter domain occupies 2–234 (IQVENLSFSY…DEFNPFLIKI (233 aa)). Position 34–41 (34–41 (GKNGSGKS)) interacts with ATP.

This sequence belongs to the ABC transporter superfamily. Energy-coupling factor EcfA family. As to quaternary structure, forms a stable energy-coupling factor (ECF) transporter complex composed of 2 membrane-embedded substrate-binding proteins (S component), 2 ATP-binding proteins (A component) and 2 transmembrane proteins (T component).

The protein localises to the cell inner membrane. Its function is as follows. ATP-binding (A) component of a common energy-coupling factor (ECF) ABC-transporter complex. Unlike classic ABC transporters this ECF transporter provides the energy necessary to transport a number of different substrates. This is Energy-coupling factor transporter ATP-binding protein EcfA1 from Fusobacterium nucleatum subsp. nucleatum (strain ATCC 25586 / DSM 15643 / BCRC 10681 / CIP 101130 / JCM 8532 / KCTC 2640 / LMG 13131 / VPI 4355).